A 1198-amino-acid chain; its full sequence is Chromosome partition protein Smc (1198 aa).

Residue 40-47 (PNGSGKSN) coordinates ATP. 2 coiled-coil regions span residues 175-211 (ITKY…GQLG) and 322-524 (LGEQ…LAKK). An SMC hinge domain is found at 534 to 647 (CGTLADLLQV…VTDMEAATRV (114 aa)). A coiled-coil region spans residues 687-1042 (SREIQELRQE…AELDKTMSER (356 aa)). A disordered region spans residues 785 to 818 (AEEQSKLTDSIQEAQEALARQEEKNRQASREMEQ). A compositionally biased stretch (basic and acidic residues) spans 803 to 818 (ARQEEKNRQASREMEQ).

The protein belongs to the SMC family. In terms of assembly, homodimer.

Its subcellular location is the cytoplasm. In terms of biological role, required for chromosome condensation and partitioning. This is Chromosome partition protein Smc from Desulfitobacterium hafniense (strain Y51).